A 148-amino-acid polypeptide reads, in one-letter code: UPF0540 protein At1g62000 (148 aa).

A signal peptide spans 1-21; that stretch reads MNATKFVVLLVIGILCAIVTA. Residues 123–132 show a composition bias toward low complexity; the sequence is RANGKVASAS. Residues 123–148 are disordered; that stretch reads RANGKVASASRVKGSSEKKKGKGKKD.

The protein belongs to the UPF0540 family.

In Arabidopsis thaliana (Mouse-ear cress), this protein is UPF0540 protein At1g62000.